The following is a 375-amino-acid chain: Actin, cytoplasmic (375 aa).

The protein belongs to the actin family.

Its subcellular location is the cytoplasm. It is found in the cytoskeleton. The catalysed reaction is ATP + H2O = ADP + phosphate + H(+). In terms of biological role, actins are highly conserved proteins that are involved in various types of cell motility and are ubiquitously expressed in all eukaryotic cells. The polypeptide is Actin, cytoplasmic (Oxytricha trifallax (Sterkiella histriomuscorum)).